The sequence spans 574 residues: Protein OBERON 2 (574 aa).

2 stretches are compositionally biased toward polar residues: residues 1–10 (MGTSSGSNHP) and 65–76 (SMSQKTEPDSME). Residues 1-76 (MGTSSGSNHP…SQKTEPDSME (76 aa)) are disordered. The PHD-type zinc-finger motif lies at 226–291 (LCMCTICNKF…VFKCRACNRT (66 aa)). A coiled-coil region spans residues 416-524 (KKARMALETC…LFEKIKLQEN (109 aa)).

In terms of assembly, self-interacts. Interacts with OBE1, OBE3 and OBE4. Binds to VPg of pea seed borne mosaic virus (PSbMV), turnip mosaic virus (TuMV) and lettuce mosaic virus (LMV), but not with VPg of tobacco etch virus (TEV), cowpea mosaic virus (CPMV), tomato black ring virus (TBRV) and grapevine fan leaf virus (GFLV). Expressed in roots, seedlings, stems, leaves, flowers and siliques, especially in the vasculature.

It localises to the nucleus. Probable transcription factor that acts together with OBE1 for the maintenance and/or establishment of both the shoot and root meristems, probably by controlling the expression of the meristem genes such as WUS, PLT1 and PLT2 and of genes required for auxin responses. Promotes cell meristematic activity via the WUSCHEL-CLAVATA pathway. Involved in the development of the basal pole and in auxin-mediated root and vascular development in the embryo. Confers sensitivity to turnip mosaic virus (TuMV) probably by promoting viral movement and multiplication via interaction with TuMV VPg. The sequence is that of Protein OBERON 2 from Arabidopsis thaliana (Mouse-ear cress).